A 310-amino-acid chain; its full sequence is MVKVYAPASSANMSVGFDVLGAAVTPVDGALLGDVVTVEAAETFSLNNLGRFADKLPSEPRENIVYQCWERFCLELGKQIPVAMTLEKNMPIGSGLGSSACSVVAALMAMNEHCGKPLNDTRLLALMGELEGRISGSIHYDNVAPCFLGGMQLMIEENDIISQQVPGFDEWLWVLAYPGIKVSTAEARAILPAQYRRQDCIAHGRHLAGFIHACYSRQPELAAKLMKDVIAEPYRERLLPGFRQARQAVAEIGAVASGISGSGPTLFALCDKPDTAQRVADWLGKNYLQNQEGFVHICRLDTAGARVLEN.

Residue 91 to 101 participates in ATP binding; sequence PIGSGLGSSAC.

This sequence belongs to the GHMP kinase family. Homoserine kinase subfamily.

It is found in the cytoplasm. The enzyme catalyses L-homoserine + ATP = O-phospho-L-homoserine + ADP + H(+). Its pathway is amino-acid biosynthesis; L-threonine biosynthesis; L-threonine from L-aspartate: step 4/5. Functionally, catalyzes the ATP-dependent phosphorylation of L-homoserine to L-homoserine phosphate. The protein is Homoserine kinase of Shigella sonnei (strain Ss046).